A 526-amino-acid chain; its full sequence is DNA polymerase epsilon subunit B (526 aa).

The protein belongs to the DNA polymerase epsilon subunit B family. In terms of assembly, subunit of the DNA polymerase II. Interacts with POL2A (via C-terminus).

Its subcellular location is the nucleus. In terms of biological role, as accessory component of DNA polymerase II participates in chromosomal DNA replication. Required for the timing and determination of cell fate during plant embryogenesis and root pole development, by promoting cell cycle and cell type patterning. Necessary for proper shoot (SAM) and root apical meristem (RAM) functions. Is essential to promote the first divisions of the zygote. The chain is DNA polymerase epsilon subunit B from Arabidopsis thaliana (Mouse-ear cress).